Here is a 251-residue protein sequence, read N- to C-terminus: Putative F-box protein L166 (251 aa).

Residues Met-1–Ile-46 enclose the F-box domain. The interval Pro-188–Arg-251 is disordered. The segment covering Thr-202–Ile-217 has biased composition (polar residues). Basic residues predominate over residues Lys-241 to Arg-251.

The polypeptide is Putative F-box protein L166 (Acanthamoeba polyphaga (Amoeba)).